The chain runs to 291 residues: 4-hydroxy-tetrahydrodipicolinate synthase (291 aa).

Thr-47 provides a ligand contact to pyruvate. The active-site Proton donor/acceptor is Tyr-134. Residue Lys-162 is the Schiff-base intermediate with substrate of the active site. Residue Ile-205 coordinates pyruvate.

This sequence belongs to the DapA family. As to quaternary structure, homotetramer; dimer of dimers.

The protein localises to the cytoplasm. The enzyme catalyses L-aspartate 4-semialdehyde + pyruvate = (2S,4S)-4-hydroxy-2,3,4,5-tetrahydrodipicolinate + H2O + H(+). The protein operates within amino-acid biosynthesis; L-lysine biosynthesis via DAP pathway; (S)-tetrahydrodipicolinate from L-aspartate: step 3/4. Catalyzes the condensation of (S)-aspartate-beta-semialdehyde [(S)-ASA] and pyruvate to 4-hydroxy-tetrahydrodipicolinate (HTPA). This chain is 4-hydroxy-tetrahydrodipicolinate synthase, found in Methanoculleus marisnigri (strain ATCC 35101 / DSM 1498 / JR1).